We begin with the raw amino-acid sequence, 185 residues long: Ribonuclease M5 1 (185 aa).

One can recognise a Toprim domain in the interval 4–87 (KEVIVVEGKD…AFLTKHDAAP (84 aa)). Positions 10, 56, and 58 each coordinate Mg(2+).

It belongs to the ribonuclease M5 family. Mg(2+) serves as cofactor.

It is found in the cytoplasm. It carries out the reaction Endonucleolytic cleavage of RNA, removing 21 and 42 nucleotides, respectively, from the 5'- and 3'-termini of a 5S-rRNA precursor.. Functionally, required for correct processing of both the 5' and 3' ends of 5S rRNA precursor. Cleaves both sides of a double-stranded region yielding mature 5S rRNA in one step. The sequence is that of Ribonuclease M5 1 from Ligilactobacillus salivarius (strain UCC118) (Lactobacillus salivarius).